Consider the following 152-residue polypeptide: Ninjurin-1 (152 aa).

Met1 is modified (N-acetylmethionine). The disordered stretch occupies residues 1-26 (MDSGTEEYELNGGLPPGTPGSPDASP). At 1-78 (MDSGTEEYEL…EQGPSFAFYV (78 aa)) the chain is on the extracellular side. Ser21 and Ser25 each carry phosphoserine. An N-terminal adhesion motif region spans residues 26–37 (PARWGWRHGPIN). The tract at residues 40 to 69 (HYASKKSAAESMLDIALLMANASQLKAVVE) is required to induce plasma membrane rupture. A helix alpha1 region spans residues 44–55 (KKSAAESMLDIA). Positions 58 to 74 (MANASQLKAVVEQGPSF) are helix alpha2. Asn60 carries an N-linked (GlcNAc...) asparagine glycan. The chain crosses the membrane as a helical span at residues 79–103 (PLVVLISISLVLQIGVGVLLIFLVK). The Cytoplasmic portion of the chain corresponds to 104 to 113 (YDLNNPAKHA). A helical transmembrane segment spans residues 114–138 (KLDFLNNLATGLVFIIVVVNIFITA). Residues 139–152 (FGVQKPLMDMAPQQ) lie on the Extracellular side of the membrane.

It belongs to the ninjurin family. Homodimer; in absence of death stimuli, forms an inactive homodimer. Homooligomer; in response to death stimuli, homooligomerizes into long, highly branched filaments and large, ring-shaped structures in the membrane. In terms of processing, cleaved by MMP9 protease to generate the Secreted ninjurin-1 form. N-linked glycosylation is required for homooligomerization. Widely expressed in both adult and embryonic tissues, primarily those of epithelial origin.

It localises to the cell membrane. It is found in the synaptic cell membrane. Its subcellular location is the secreted. Its activity is regulated as follows. In response to death stimuli, homooligomerizes and disrupts membrane integrity by introducing the hydrophilic faces of alpha1 and alpha2 helices into the hydrophobic membrane. Homooligomerization and ability to mediate plasma membrane rupture is inhibited by glycine; it is unclear whether glycine directly or indirectly inhibits homooligomerization. In normal conditions, NINJ1 is autoinhibited via formation of a homodimer: in the inactive homodimer, the alpha1 and alpha2 helices (residues 44-74) form a single transmembrane region without a kink, in which hydrophilic faces of alpha1 and alpha2 helices are sequestered. Effector of various programmed cell death, such as pyroptosis and necroptosis, which mediates plasma membrane rupture (cytolysis). Oligomerizes in response to death stimuli and forms ring-like structures on the plasma membrane: acts by cutting and shedding membrane disks, like a cookie cutter, leading to membrane damage and loss that cannot be repaired by the cell. Plasma membrane rupture leads to release intracellular molecules named damage-associated molecular patterns (DAMPs) that propagate the inflammatory response. Mechanistically, mediates plasma membrane rupture by introducing hydrophilic faces of 2 alpha helices into the hydrophobic membrane. Induces plasma membrane rupture downstream of Gasdermin (GSDMA, GSDMB, GSDMC, GSDMD, or GSDME) or MLKL during pyroptosis or necroptosis, respectively. Acts as an effector of PANoptosis downstream of CASP1, CASP4, CASP8 and RIPK3. Also induces plasma membrane rupture in response to cell swelling caused by osmotic stress and ferroptosis downstream of lipid peroxidation. Acts as a regulator of Toll-like receptor 4 (TLR4) signaling triggered by lipopolysaccharide (LPS) during systemic inflammation; directly binds LPS. Involved in leukocyte migration during inflammation by promoting transendothelial migration of macrophages via homotypic binding. Promotes the migration of monocytes across the brain endothelium to central nervous system inflammatory lesions. Also acts as a homophilic transmembrane adhesion molecule involved in various processes such as axonal growth, cell chemotaxis and angiogenesis. Promotes cell adhesion by mediating homophilic interactions via its extracellular N-terminal adhesion motif (N-NAM). Involved in the progression of the inflammatory stress by promoting cell-to-cell interactions between immune cells and endothelial cells. Plays a role in nerve regeneration by promoting maturation of Schwann cells. Acts as a regulator of angiogenesis. Promotes the formation of new vessels by mediating the interaction between capillary pericyte cells and endothelial cells. Promotes osteoclasts development by enhancing the survival of prefusion osteoclasts. Also involved in striated muscle growth and differentiation. In terms of biological role, secreted form generated by cleavage, which has chemotactic activity. Acts as an anti-inflammatory mediator by promoting monocyte recruitment, thereby ameliorating atherosclerosis. This Homo sapiens (Human) protein is Ninjurin-1.